A 233-amino-acid polypeptide reads, in one-letter code: 7-cyano-7-deazaguanine synthase (233 aa).

7–17 (CSGGLDSVSLA) contacts ATP. Positions 185, 193, 196, and 199 each coordinate Zn(2+).

Belongs to the QueC family. The cofactor is Zn(2+).

It catalyses the reaction 7-carboxy-7-deazaguanine + NH4(+) + ATP = 7-cyano-7-deazaguanine + ADP + phosphate + H2O + H(+). It functions in the pathway purine metabolism; 7-cyano-7-deazaguanine biosynthesis. Catalyzes the ATP-dependent conversion of 7-carboxy-7-deazaguanine (CDG) to 7-cyano-7-deazaguanine (preQ(0)). The chain is 7-cyano-7-deazaguanine synthase from Ruegeria sp. (strain TM1040) (Silicibacter sp.).